Here is a 431-residue protein sequence, read N- to C-terminus: Glutamate-1-semialdehyde 2,1-aminomutase (431 aa).

Lys265 carries the N6-(pyridoxal phosphate)lysine modification.

Belongs to the class-III pyridoxal-phosphate-dependent aminotransferase family. HemL subfamily. As to quaternary structure, homodimer. Pyridoxal 5'-phosphate is required as a cofactor.

The protein localises to the cytoplasm. It carries out the reaction (S)-4-amino-5-oxopentanoate = 5-aminolevulinate. The protein operates within porphyrin-containing compound metabolism; protoporphyrin-IX biosynthesis; 5-aminolevulinate from L-glutamyl-tRNA(Glu): step 2/2. The protein is Glutamate-1-semialdehyde 2,1-aminomutase of Aliivibrio fischeri (strain MJ11) (Vibrio fischeri).